A 391-amino-acid polypeptide reads, in one-letter code: 3-ketoacyl-CoA thiolase (391 aa).

C95 acts as the Acyl-thioester intermediate in catalysis. Catalysis depends on proton acceptor residues H347 and C377.

Belongs to the thiolase-like superfamily. Thiolase family. In terms of assembly, heterotetramer of two alpha chains (FadB) and two beta chains (FadA).

It localises to the cytoplasm. The catalysed reaction is an acyl-CoA + acetyl-CoA = a 3-oxoacyl-CoA + CoA. It functions in the pathway lipid metabolism; fatty acid beta-oxidation. Its function is as follows. Catalyzes the final step of fatty acid oxidation in which acetyl-CoA is released and the CoA ester of a fatty acid two carbons shorter is formed. The polypeptide is 3-ketoacyl-CoA thiolase (Ectopseudomonas mendocina (strain ymp) (Pseudomonas mendocina)).